The following is a 293-amino-acid chain: Plant cysteine oxidase 1 (293 aa).

Fe cation-binding residues include His-148, His-150, and His-211. Positions 250–293 are disordered; sequence SEDDDVLSSEEEKEGYAWLQERDDNPEDHTNVVGALYRGPKVED. The span at 251 to 262 shows a compositional bias: acidic residues; the sequence is EDDDVLSSEEEK. Residues 269–279 show a composition bias toward basic and acidic residues; the sequence is QERDDNPEDHT.

This sequence belongs to the cysteine dioxygenase family. Requires Fe(2+) as cofactor.

Its subcellular location is the nucleus. It is found in the cytoplasm. The enzyme catalyses L-cysteine + O2 = 3-sulfino-L-alanine + H(+). In terms of biological role, catalyzes the oxidation of N-terminal cysteine residues (N-Cys), thus preparing the protein for N-end rule pathway-mediated proteasomal degradation, upstream of the N-end rule enzymes ATE1, ATE2 and PRT6. Controls the preparation of the group VII ethylene response factor (ERF-VII) proteins for degradation via the 26S proteasome N-end rule pathway. Acts as an oxygen sensor that controls the stability of ERF-VII proteins, which are stabilized in flooding-induced hypoxia, and regulate transcriptional adaptation to these adverse conditions. Not active on Cys located inside or at the C-terminus of a peptide. Acts redundantly with PCO2 to repress the anaerobic response. The chain is Plant cysteine oxidase 1 from Arabidopsis thaliana (Mouse-ear cress).